The primary structure comprises 212 residues: Protein-L-isoaspartate O-methyltransferase 1 (212 aa).

The active site involves serine 60.

Belongs to the methyltransferase superfamily. L-isoaspartyl/D-aspartyl protein methyltransferase family.

Its subcellular location is the cytoplasm. It carries out the reaction [protein]-L-isoaspartate + S-adenosyl-L-methionine = [protein]-L-isoaspartate alpha-methyl ester + S-adenosyl-L-homocysteine. Catalyzes the methyl esterification of L-isoaspartyl residues in peptides and proteins that result from spontaneous decomposition of normal L-aspartyl and L-asparaginyl residues. It plays a role in the repair and/or degradation of damaged proteins. This Anaeromyxobacter sp. (strain Fw109-5) protein is Protein-L-isoaspartate O-methyltransferase 1.